The sequence spans 349 residues: GDSL esterase/lipase At2g19050 (349 aa).

Residues 1–23 (MAEAIFKALLLVIATTAFATTEA) form the signal peptide. Ser-38 (nucleophile) is an active-site residue. Asn-49 carries N-linked (GlcNAc...) asparagine glycosylation. Catalysis depends on residues Asp-316 and His-319.

The protein belongs to the 'GDSL' lipolytic enzyme family.

It localises to the secreted. The sequence is that of GDSL esterase/lipase At2g19050 from Arabidopsis thaliana (Mouse-ear cress).